The chain runs to 216 residues: MPKKFQGENSKSATARARKAEAKAVADARKQKELEDALWEDNDKRVVKKEQRKDDKERKRLEALERKRENQRLLEEEDSKIKGKQTKEGPSKVTRAQIEETLQSKQNVKEIKEKEKSHLDVPLEENVNRIVPEEGTVEARTIEDAIAVLSTKEDLDRHPERRMKAAYTAFEEANMPRVKMENPNMRLSQLKQQLKKEWTKSPENPLNQRAASYNTK.

Disordered regions lie at residues 1 to 93 (MPKK…PSKV) and 194 to 216 (LKKE…YNTK). The segment covering 18 to 90 (RKAEAKAVAD…IKGKQTKEGP (73 aa)) has biased composition (basic and acidic residues). Positions 18-119 (RKAEAKAVAD…EIKEKEKSHL (102 aa)) form a coiled coil. A compositionally biased stretch (polar residues) spans 201 to 216 (SPENPLNQRAASYNTK).

This sequence belongs to the CCDC124 family. As to quaternary structure, associates with translationally inactive ribosomes in the nonrotated state.

It is found in the cytoplasm. The protein resides in the cytoskeleton. It localises to the microtubule organizing center. The protein localises to the centrosome. Its subcellular location is the midbody. In terms of biological role, ribosome-binding protein involved in ribosome hibernation: associates with translationally inactive ribosomes and stabilizes the nonrotated conformation of the 80S ribosome, thereby promoting ribosome preservation and storage. In Danio rerio (Zebrafish), this protein is Coiled-coil domain-containing protein 124 (ccdc124).